A 2545-amino-acid chain; its full sequence is Methylphloroacetophenone synthase (2545 aa).

The interval 8-261 (AFGALAPWPA…HVAIHEGIPQ (254 aa)) is N-terminal acylcarrier protein transacylase (SAT) domain. Residues 383–798 (KDAIAIIGMG…GSNAAMIVLE (416 aa)) enclose the Ketosynthase family 3 (KS3) domain. Catalysis depends on for beta-ketoacyl synthase activity residues cysteine 547, histidine 682, and histidine 721. The malonyl-CoA:ACP transacylase (MAT) domain stretch occupies residues 914–1218 (LCFGGQVSDR…VSLQLNKPNS (305 aa)). The active-site For acyl/malonyl transferase activity is the serine 1001. An N-terminal hotdog fold region spans residues 1293-1423 (LPAVLIRLKS…GTVNLKVADD (131 aa)). One can recognise a PKS/mFAS DH domain in the interval 1293-1605 (LPAVLIRLKS…FTDIRRPVPI (313 aa)). Residues 1296-1604 (VLIRLKSFDS…NFTDIRRPVP (309 aa)) form a product template (PT) domain region. The tract at residues 1449-1605 (RSESLRGNVL…FTDIRRPVPI (157 aa)) is C-terminal hotdog fold. Residues 1657 to 1731 (TSIYEDICGL…SLVDYLHGKG (75 aa)) enclose the Carrier domain. An O-(pantetheine 4'-phosphoryl)serine modification is found at serine 1691. A compositionally biased stretch (low complexity) spans 1748–1768 (SSSHAISTGASSPPDSSGASA). Positions 1748 to 1773 (SSSHAISTGASSPPDSSGASAMTTPP) are disordered. Positions 1931–2163 (FGASETKLLN…GFKHVSWTDG (233 aa)) are methyltransferase (CMeT) domain. Residues 2198–2544 (AGVPMEEVVW…YDFICRQLGM (347 aa)) are claisen cyclase (CLC) domain. Residues serine 2321, aspartate 2481, and histidine 2513 each act as for thioesterase activity in the active site.

Its function is as follows. Methylphloroacetophenone synthase; part of the gene cluster that mediates the biosynthesis of usnic acid, a dibenzofuran lichen product possessing a broad spectrum of biological activities. Two genes, mpas and mpao, comprise the usnic acid biosynthetic gene cluster with a single post-PKS enzyme, the methylphloracetophenone oxidase (mpao). The methylphloroacetophenone synthase (mpas) is a non-reducing polyketide synthase that produces methylphloracetophenone from acetate via a methylated tetraketide intermediate. The methylphloroacetophenone oxidase then carries out the oxidative dimerization of methylphloracetophenone to usnic acid. The protein is Methylphloroacetophenone synthase of Cladonia uncialis (Cup lichen).